The sequence spans 801 residues: MKVGRNMTNQQQSAAASSDLDLLDRYWRAANYLSVGQIYLLDNPLLREPLRAEHIKPRLLGHWGTTPGLNFIYAHLNRVIRALDLNVLYVCGPGHGGPGMVANTYLEGSYSEIYPNIARDADGLRKLFRQFSFPGGIPSHAAPETPGSIHEGGELGYALVHAYGAALDNPDLVVACVVGDGEAETGPLAASWHSNKFLNPAHDGAVLPILHLNGYKIANPTVLGRMSDSEIRDLFRGFGHEPLFVEGDDPKLMHRIMADALDVAFASIRSIQQHARDGRKNIERPRWPMIVLRSPKGWTGPKEVDGKKVEGFWRAHQVPVASCRENPAHLKVLEDWMRSYEPEKLFDASGALVPELQALAPEGNRRMGANPHANGGLLKKELKLPDFRSFAVEVPQPGAVTGEATRELGRFLRDVIRLNAQERNFRIMGPDETASNRLDAVFETTERVWMEPIEPYDVHLAQDGRVMEVLSEHLCQGWLEGYLLTGRHGFFSCYEAFIHIVDSMFNQHAKWLKVTRHLPWRRPIASLNYLLTSHVWRQDHNGFSHQDPGFVDLVANKKADIVRIYFPPDANTLLWIADHCLRTYNRINVIVAGKQPAPQWLSMQDAATHCDVGIGIWTWAGTEDAGGEPDVVMACAGDVPTLETLAAVDLLRKALPDLNIRVVNVVDLMTLQPQDQHPHGLSDRDFDSLFTRDKPVIFAYHGYPHLIHRLTYNRTNHAGLHVRGFAEEGTTTTPFDMVVLNELDRYHLAIEAIERVPGLATRAAQVKQQLRDKLLEHSRYVREHGEDMPEIRDWVWPGKPG.

This sequence belongs to the XFP family. Thiamine diphosphate is required as a cofactor.

The sequence is that of Probable phosphoketolase from Bradyrhizobium diazoefficiens (strain JCM 10833 / BCRC 13528 / IAM 13628 / NBRC 14792 / USDA 110).